The chain runs to 569 residues: MSTNSSFNRSWAKVILNALLRYGVKHFCIAPGSRSTPLTLEALQLQHTQQAECHSHFDERGLAFFALGMAKATNDPVAIIVTSGTAVANLYPALIEASLTQHKLIVLSADRPPELIGCGVNQAITQPGIFADYPIANIHLPKASTDYNASWLAATIEQACVNQQQQGGVIHINAPFAEPLYETDENEINNTPWLKPLQSWLIKPTAKWLNSQSIQSEVSMHENWDYWRTKRGVIIVGKLPVEQGVGIKAWAETLGWCLLTDIQSCVDASLPYADIWLSNNTVHERLLNADIVIQFGSQIISKRVNKYLADFKGEFWQVDEYQRYLNPFAHRQTRFVAKAHHFLRVHPPLRQKPWLLEPLALSQFCASFIEQQVGGSLNEASLAHHIEQVLATNGNLFIGNSLFVRLVDALCKLPEGYPVYTNRGASGIDGLIATMAGIAKASGQPTVGVVGDISALHDLNSISLLSKINHPSILFVINNSGGAIFDMLPVEARVKEQFYRLSHNYEFSQVAAMFGIEYIRPFTWADLKAKLKLAYGRKSATIVEIKVNDQDGSNLYKSLIKQISQAEIA.

It belongs to the TPP enzyme family. MenD subfamily. Homodimer. The cofactor is Mg(2+). It depends on Mn(2+) as a cofactor. Requires thiamine diphosphate as cofactor.

It carries out the reaction isochorismate + 2-oxoglutarate + H(+) = 5-enolpyruvoyl-6-hydroxy-2-succinyl-cyclohex-3-ene-1-carboxylate + CO2. It participates in quinol/quinone metabolism; 1,4-dihydroxy-2-naphthoate biosynthesis; 1,4-dihydroxy-2-naphthoate from chorismate: step 2/7. The protein operates within quinol/quinone metabolism; menaquinone biosynthesis. Catalyzes the thiamine diphosphate-dependent decarboxylation of 2-oxoglutarate and the subsequent addition of the resulting succinic semialdehyde-thiamine pyrophosphate anion to isochorismate to yield 2-succinyl-5-enolpyruvyl-6-hydroxy-3-cyclohexene-1-carboxylate (SEPHCHC). In Haemophilus ducreyi (strain 35000HP / ATCC 700724), this protein is 2-succinyl-5-enolpyruvyl-6-hydroxy-3-cyclohexene-1-carboxylate synthase.